Consider the following 1140-residue polypeptide: Eukaryotic translation initiation factor 3 subunit A (1140 aa).

Positions 319–502 constitute a PCI domain; that stretch reads LQRMAAHVLL…NSIYFGTDLT (184 aa). 3 stretches are compositionally biased toward basic and acidic residues: residues 589 to 624, 830 to 900, and 921 to 984; these read QNNA…EERE, AAEE…RGGD, and ERND…EPDS. 2 disordered regions span residues 589-632 and 830-1140; these read QNNA…QNEI and AAEE…VKRR. Over residues 987-998 the composition is skewed to low complexity; it reads AAGAKDAGGAPA. 3 stretches are compositionally biased toward basic and acidic residues: residues 999–1050, 1058–1086, and 1109–1130; these read SRDD…EPQR, DAPR…RGDQ, and PRDE…KGGD.

The protein belongs to the eIF-3 subunit A family. Component of the eukaryotic translation initiation factor 3 (eIF-3) complex. The eIF-3 complex interacts with pix.

It is found in the cytoplasm. Its function is as follows. RNA-binding component of the eukaryotic translation initiation factor 3 (eIF-3) complex, which is involved in protein synthesis of a specialized repertoire of mRNAs and, together with other initiation factors, stimulates binding of mRNA and methionyl-tRNAi to the 40S ribosome. The eIF-3 complex specifically targets and initiates translation of a subset of mRNAs involved in cell proliferation. The protein is Eukaryotic translation initiation factor 3 subunit A of Drosophila ananassae (Fruit fly).